The primary structure comprises 64 residues: Prokaryotic ubiquitin-like protein Pup (64 aa).

The tract at residues 1 to 38 (MAQEQTKRGGGGGEDDDPTGSTAAGQERREKLTEETDD) is disordered. Residues 21-58 (STAAGQERREKLTEETDDLLDEIDDVLEENAEDFVRAY) are ARC ATPase binding. A coiled-coil region spans residues 23–52 (AAGQERREKLTEETDDLLDEIDDVLEENAE). Position 64 is a deamidated glutamine (glutamine 64). Glutamine 64 participates in a covalent cross-link: Isoglutamyl lysine isopeptide (Gln-Lys) (interchain with K-? in acceptor proteins).

The protein belongs to the prokaryotic ubiquitin-like protein family. As to quaternary structure, strongly interacts with the proteasome-associated ATPase ARC through a hydrophobic interface; the interacting region of Pup lies in its C-terminal half. There is one Pup binding site per ARC hexamer ring. Is modified by deamidation of its C-terminal glutamine to glutamate by the deamidase Dop, a prerequisite to the subsequent pupylation process.

It functions in the pathway protein degradation; proteasomal Pup-dependent pathway. In terms of biological role, protein modifier that is covalently attached to lysine residues of substrate proteins, thereby targeting them for proteasomal degradation. The tagging system is termed pupylation. This Mycolicibacterium gilvum (strain PYR-GCK) (Mycobacterium gilvum (strain PYR-GCK)) protein is Prokaryotic ubiquitin-like protein Pup.